Reading from the N-terminus, the 284-residue chain is ATP phosphoribosyltransferase (284 aa).

It belongs to the ATP phosphoribosyltransferase family. Long subfamily. Requires Mg(2+) as cofactor.

Its subcellular location is the cytoplasm. It catalyses the reaction 1-(5-phospho-beta-D-ribosyl)-ATP + diphosphate = 5-phospho-alpha-D-ribose 1-diphosphate + ATP. It participates in amino-acid biosynthesis; L-histidine biosynthesis; L-histidine from 5-phospho-alpha-D-ribose 1-diphosphate: step 1/9. Its activity is regulated as follows. Feedback inhibited by histidine. Functionally, catalyzes the condensation of ATP and 5-phosphoribose 1-diphosphate to form N'-(5'-phosphoribosyl)-ATP (PR-ATP). Has a crucial role in the pathway because the rate of histidine biosynthesis seems to be controlled primarily by regulation of HisG enzymatic activity. The polypeptide is ATP phosphoribosyltransferase (Methanococcoides burtonii (strain DSM 6242 / NBRC 107633 / OCM 468 / ACE-M)).